Here is a 159-residue protein sequence, read N- to C-terminus: Growth arrest and DNA damage-inducible protein GADD45 gamma (159 aa).

The segment at 43–86 is homodimerization; the sequence is VYESAKVLNVDPDNVTFCVLAADEEDEGDIALQIHFTLIQAFCC.

This sequence belongs to the GADD45 family. In terms of assembly, undergoes concentration-dependent homodimerization, which is required for growth inhibititory activity and enhances interaction with PCNA. Interacts with GADD45GIP1. Interacts with PCNA.

Functionally, involved in the regulation of growth and apoptosis. Mediates activation of stress-responsive MTK1/MEKK4 MAPKKK. The protein is Growth arrest and DNA damage-inducible protein GADD45 gamma (Gadd45g) of Mus musculus (Mouse).